The following is an 855-amino-acid chain: Potassium channel AKT2 (855 aa).

A compositionally biased stretch (low complexity) spans 1–12; sequence MKTSSFESASSS. The tract at residues 1–24 is disordered; that stretch reads MKTSSFESASSSGGSGGGGGGGGG. Topologically, residues 1–75 are cytoplasmic; it reads MKTSSFESAS…PLDSRYRCWD (75 aa). Over residues 13–24 the composition is skewed to gly residues; the sequence is GGSGGGGGGGGG. The helical transmembrane segment at 76–96 threads the bilayer; that stretch reads TFMVVLVAYSAWVYPFEVAFM. At 97 to 105 the chain is on the extracellular side; that stretch reads NASPKGGLE. A helical membrane pass occupies residues 106-126; the sequence is VADIVVDLFFAVDIVLTFFVA. Over 127–149 the chain is Cytoplasmic; the sequence is YIDSRTQLLVRDRRRIATRYLST. The chain crosses the membrane as a helical span at residues 150–170; sequence FFIMDVASTIPFQGLAYIVTG. The Extracellular segment spans residues 171–179; that stretch reads EVRESPAFS. A helical; Voltage-sensor membrane pass occupies residues 180-200; that stretch reads LLGILRLWRLRKVKQFFTRLE. Residues 201–214 lie on the Cytoplasmic side of the membrane; the sequence is KDIRFNYFWIRCAR. Residues 215-235 traverse the membrane as a helical segment; the sequence is LIAVTLFLVHCAGCLYYLIAD. The Extracellular portion of the chain corresponds to 236 to 262; sequence RYPHREKTWIGAVIPDFQEASLWIRYT. An intramembrane region (pore-forming) is located at residues 263–282; the sequence is SSVYWSITTMTTVGYGDMHA. The Extracellular portion of the chain corresponds to 283 to 285; the sequence is QNT. The helical transmembrane segment at 286–306 threads the bilayer; sequence VEMIFNIFYMLFNLGLTAYLI. The Cytoplasmic segment spans residues 307 to 855; that stretch reads GNMTNLVVEG…VASMDSVSGS (549 aa). 391-511 lines the a nucleoside 3',5'-cyclic phosphate pocket; that stretch reads LFKGVSREVL…VVIIKNFLKH (121 aa). ANK repeat units follow at residues 536–565, 569–598, 602–631, 634–663, and 667–696; these read NIPCNLLTVAATGNSSFLEDLLKVGMDPDV, KGRTALHIAASKGYEDCVLVLLKQACNVNI, QGNTALWNAIAARHHKIFNILYHFARVSSP, AAGDLLCLAARRGDLDTLRELLKHGLAVDS, and DGATALRVALAEGHADVARLLVLNGASVDR. Positions 744–765 are disordered; it reads EVGSSGDSRNGRRQSARSDGAH. A KHA domain is found at 768–855; that stretch reads RVSIYRGHPF…VASMDSVSGS (88 aa).

This sequence belongs to the potassium channel family. Plant (TC 1.A.1.4) subfamily. As to quaternary structure, the potassium channel is probably a homo- or heterotetrameric complex of pore-forming subunits.

The protein resides in the membrane. Its function is as follows. Probable inward-rectifying potassium channel. Assuming opened or closed conformations in response to the voltage difference across the membrane, the channel is activated by hyperpolarization. The polypeptide is Potassium channel AKT2 (Oryza sativa subsp. japonica (Rice)).